Consider the following 213-residue polypeptide: Pyrrolidone-carboxylate peptidase (213 aa).

Catalysis depends on residues Glu78, Cys141, and His165.

The protein belongs to the peptidase C15 family. As to quaternary structure, homotetramer.

The protein resides in the cytoplasm. The enzyme catalyses Release of an N-terminal pyroglutamyl group from a polypeptide, the second amino acid generally not being Pro.. Functionally, removes 5-oxoproline from various penultimate amino acid residues except L-proline. The protein is Pyrrolidone-carboxylate peptidase of Alkaliphilus oremlandii (strain OhILAs) (Clostridium oremlandii (strain OhILAs)).